The primary structure comprises 259 residues: (3R)-3-hydroxyacyl-CoA dehydrogenase (259 aa).

Residues 13 to 21 and 40 to 41 contribute to the NAD(+) site; these read LVTGAGSGI and DL. Position 58 is a phosphoserine (Ser-58). Residue 72 to 74 coordinates NAD(+); sequence ADV. Ser-154 contacts substrate. N6-succinyllysine is present on Lys-158. The active-site Proton acceptor is the Tyr-167. Residues 167-171 and 200-202 each bind NAD(+); these read YAASK and ITT. N6-succinyllysine is present on Lys-171.

Belongs to the short-chain dehydrogenases/reductases (SDR) family. As to quaternary structure, heterotetramer with CBR4; contains two molecules of HSD17B8 and CBR4.

It localises to the mitochondrion matrix. The catalysed reaction is a (3R)-3-hydroxyacyl-CoA + NAD(+) = a 3-oxoacyl-CoA + NADH + H(+). It carries out the reaction 17beta-estradiol + NAD(+) = estrone + NADH + H(+). The enzyme catalyses testosterone + NAD(+) = androst-4-ene-3,17-dione + NADH + H(+). It catalyses the reaction 17beta-hydroxy-5alpha-androstan-3-one + NAD(+) = 5alpha-androstan-3,17-dione + NADH + H(+). Its pathway is steroid biosynthesis; estrogen biosynthesis. It functions in the pathway lipid metabolism; fatty acid biosynthesis. The protein operates within lipid metabolism; mitochondrial fatty acid beta-oxidation. Its function is as follows. Required for the solubility and assembly of the heterotetramer 3-ketoacyl-[acyl carrier protein] (ACP) reductase functional complex (KAR or KAR1) that forms part of the mitochondrial fatty acid synthase (mtFAS). Alpha-subunit of the KAR complex that acts as scaffold protein required for the stability of carbonyl reductase type-4 (CBR4, beta-subunit of the KAR complex) and for its 3-ketoacyl-ACP reductase activity, thereby participating in mitochondrial fatty acid biosynthesis. Catalyzes the NAD-dependent conversion of (3R)-3-hydroxyacyl-CoA into 3-ketoacyl-CoA (3-oxoacyl-CoA) with no chain length preference; this enzymatic activity is not needed for the KAR function. Prefers (3R)-3-hydroxyacyl-CoA over (3S)-3-hydroxyacyl-CoA and displays enzymatic activity only in the presence of NAD(+). Cooperates with enoyl-CoA hydratase 1 in mitochondria, together they constitute an alternative route to the auxiliary enzyme pathways for the breakdown of Z-PUFA (cis polyunsaturated fatty acid) enoyl-esters. NAD-dependent 17-beta-hydroxysteroid dehydrogenase with highest activity towards estradiol (17beta-estradiol or E2). Has very low activity towards testosterone and dihydrotestosterone (17beta-hydroxy-5alpha-androstan-3-one). Primarily an oxidative enzyme, it can switch to a reductive mode determined in the appropriate physiologic milieu and catalyze the reduction of estrone (E1) to form biologically active 17beta-estradiol. The chain is (3R)-3-hydroxyacyl-CoA dehydrogenase (HSD17B8) from Canis lupus familiaris (Dog).